A 1828-amino-acid chain; its full sequence is Protein TIC 214 (1828 aa).

Helical transmembrane passes span 18 to 38, 64 to 84, 87 to 107, 124 to 144, 172 to 192, and 222 to 242; these read IINSVVVVGLYYGFLTTFSIG, FITGQLMIFISIYYAPLHLAM, PYTITVLGLPYLLFHFFWKNH, FSIQSIFLNNFIFQLLNHFVL, VGWLIGHILFMKWVGLILFWI, and VNIFLFITCVYYLGRIPSPIL. Over residues 270–279 the composition is skewed to basic and acidic residues; it reads SEAKETKQEQ. Disordered regions lie at residues 270–301, 618–637, 741–763, and 1533–1571; these read SEAKETKQEQKGSFAEEDSSLGSEEREDPNKL, DLQQQERENEEESTEDHAIR, EFKTSNSDEKETKEKEKKREDKK, and KEEFGQGNLGSDTQNQQKDVEKDYAKSDIKKRGKKRQSK. The segment covering 1550–1562 has biased composition (basic and acidic residues); sequence KDVEKDYAKSDIK.

It belongs to the TIC214 family. Part of the Tic complex.

The protein localises to the plastid. Its subcellular location is the chloroplast inner membrane. Involved in protein precursor import into chloroplasts. May be part of an intermediate translocation complex acting as a protein-conducting channel at the inner envelope. This is Protein TIC 214 from Calycanthus floridus var. glaucus (Eastern sweetshrub).